A 402-amino-acid chain; its full sequence is Cysteine-rich venom protein (402 aa).

Residues 1–13 (MNLALFIIFATIF) form the signal peptide. An SCP domain is found at 57-199 (LETHNQLRNK…VKKVLYTCNY (143 aa)).

It belongs to the CRISP family. Contains 7 disulfide bonds. As to expression, expressed by the venom gland.

The protein resides in the secreted. In Tityus serrulatus (Brazilian scorpion), this protein is Cysteine-rich venom protein.